A 388-amino-acid polypeptide reads, in one-letter code: Trans-enoyl reductase tenC (388 aa).

51–54 (VDGK) is an NADP(+) binding site. Residue 142-149 (VGIASVGM) coordinates substrate. NADP(+)-binding positions include 219–222 (SSES), tyrosine 237, and 284–285 (LD). Residue 304–308 (SFTQF) coordinates substrate. 373-374 (IK) provides a ligand contact to NADP(+).

This sequence belongs to the zinc-containing alcohol dehydrogenase family. In terms of assembly, monomer.

Its pathway is secondary metabolite biosynthesis. In terms of biological role, trans-enoyl reductase; part of the gene cluster that mediates the biosynthesis of tenellin-type 2-pyridones, iron-chelating compounds involved in iron stress tolerance, competition with the natural competitor fungus Metarhizium robertsii and insect hosts infection. TenC collaborates with the hybrid PKS-NRPS synthetase tenS to catalyze the assembly of the polyketide-amino acid backbone, since tenS lacks a designated enoylreductase (ER) domain. Upon formation of the polyketide backbone on the thiotemplate of tenS, the triketide is transferred to the NRPS module and linked to tyrosine to produce the pyrrolidine-2-dione intermediates, including pretellinin A, 11-hydropretellenin A, 12-hydropretellenin A, 13-hydropretellenin A, 14-hydropretellenin A, 12-oxopretellenin A and prototellinin D. The pathway begins with the assembly of the polyketide-amino acid backbone by the hybrid PKS-NRPS tenS with the help of the enoyl reductase tenC. These enzymes catalyze the synthesis of the pyrrolidine-2-dione intermediates pretellinin A, 11-hydropretellenin A, 12-hydropretellenin A, 13-hydropretellenin A, 14-hydropretellenin A, 12-oxopretellenin A and prototellinin D. The cytochrome P450 monooxygenase tenA then catalyzes an oxidative ring expansion of pretenellin A and 14-hydropretellenin A to form the 2-pyridone core, leading to pretenellin B and pyridovericin, respectively. The cytochrome P450 monooxygenase tenB is then required for the selective N-hydroxylation of the 2-pyridone nitrogen of yield tellinin and 15-hydroxytellenin (15-HT), respectively. The UDP-glucosyltransferase GT1 and the methyltransferase MT1, located outside the tenS gene cluster, contribute to the stepwise glycosylation and methylation of 15-HT to obtain the glycoside pyridovericin-N-O-(4-O-methyl-beta-D-glucopyranoside) (PMGP). Additional related compounds such as 1-O-methyl-15-HT, (8Z)-1-O-methyl-15-HT, and O-methyltenellin A are also produced but the enzymes involved in their biosynthesis have still to be determined. This chain is Trans-enoyl reductase tenC, found in Beauveria bassiana (strain ARSEF 2860) (White muscardine disease fungus).